The chain runs to 331 residues: L-lactate dehydrogenase A chain (331 aa).

NAD(+) contacts are provided by residues glycine 29–lysine 57 and arginine 98. Positions 105, 137, and 168 each coordinate substrate. NAD(+) is bound at residue asparagine 137. The active-site Proton acceptor is histidine 192. A substrate-binding site is contributed by threonine 247.

It belongs to the LDH/MDH superfamily. LDH family. Homotetramer.

The protein localises to the cytoplasm. It catalyses the reaction (S)-lactate + NAD(+) = pyruvate + NADH + H(+). It functions in the pathway fermentation; pyruvate fermentation to lactate; (S)-lactate from pyruvate: step 1/1. In terms of biological role, interconverts simultaneously and stereospecifically pyruvate and lactate with concomitant interconversion of NADH and NAD(+). The sequence is that of L-lactate dehydrogenase A chain (ldha) from Parachaenichthys charcoti (Charcot's dragonfish).